The sequence spans 344 residues: Mitochondrial substrate carrier family protein D (344 aa).

Residues 1–22 (MDSTKTNNKWAAAGILNSVGKD) lie on the Mitochondrial intermembrane side of the membrane. Solcar repeat units follow at residues 17–104 (NSVG…CQSY), 119–212 (IPYH…MKRK), and 239–327 (VPAW…TRNL). A helical transmembrane segment spans residues 23–43 (FVAGSVGGMSSIMAGHPFDTI). Residues 44–75 (KVMLQDASGNLPKFKNGFQALKYIMKVDGIKG) lie on the Mitochondrial matrix side of the membrane. The helical transmembrane segment at 76–96 (IYRGLSVPLFSVSFTNSVFFA) threads the bilayer. Residues 97 to 116 (TNNFCQSYFHPPCKDENGED) are Mitochondrial intermembrane-facing. The chain crosses the membrane as a helical span at residues 117 to 137 (ILIPYHKAAAAGAIAGGVISL). Residues 138 to 186 (LITPRDLVKSKLQVQCRPFGSTNVSLQYKGPIDVIRQTIKRDGIKGMFK) lie on the Mitochondrial matrix side of the membrane. The chain crosses the membrane as a helical span at residues 187-207 (GIRSTFCRDIPGDAVYFVVYE). Over 208–238 (FMKRKLLALSKNNNNNNNNNDNNDNSSPKAG) the chain is Mitochondrial intermembrane. The chain crosses the membrane as a helical span at residues 239-259 (VPAWVAIGAGGCAGMSFWMSI). At 260 to 301 (YPMDVVKTRIQTQPDHLPPQYTSVLQTITKIYREEGISVFFR) the chain is on the mitochondrial matrix side. The chain crosses the membrane as a helical span at residues 302–321 (GFSATILRAFPTSAVNFLMY). Residues 322–344 (ETTRNLLNSKDPFYNNNDHYNAE) are Mitochondrial intermembrane-facing.

This sequence belongs to the mitochondrial carrier (TC 2.A.29) family.

The protein localises to the mitochondrion inner membrane. In terms of biological role, calcium-dependent mitochondrial solute carrier. Mitochondrial solute carriers shuttle metabolites, nucleotides, and cofactors through the mitochondrial inner membrane. In Dictyostelium discoideum (Social amoeba), this protein is Mitochondrial substrate carrier family protein D (mcfD).